The chain runs to 1116 residues: cGMP-specific 3',5'-cyclic phosphodiesterase (1116 aa).

Disordered stretches follow at residues 1 to 36 and 82 to 136; these read MTDVSATTGRAGDRVSSTSSEVAVETTSQALTNGAA and KSEC…ATQQ. Residues 15 to 28 are compositionally biased toward low complexity; that stretch reads VSSTSSEVAVETTS. Residues 86 to 136 show a composition bias toward polar residues; that stretch reads HSQSNNNQHVETAPSKQSSDSEASAPTTVSIPSANAKINSSSSGKTTATQQ. 2 GAF domains span residues 241–393 and 425–611; these read DIDV…GIGI and NLEC…GLGI. Residues 641–964 form the PDEase domain; that stretch reads SQDQTEKLAQ…RNWQDLAEKV (324 aa). Catalysis depends on His-717, which acts as the Proton donor. 4 residues coordinate a divalent metal cation: His-721, His-757, Asp-758, and Asp-868. Disordered regions lie at residues 1005-1031 and 1067-1116; these read QHGGSAGGGEDTHTPEHQRSSSRLSIK and HVSE…CALL. Composition is skewed to basic and acidic residues over residues 1014-1023 and 1067-1076; these read EDTHTPEHQR and HVSEDMDDKS. Residues 1085 to 1103 are compositionally biased toward low complexity; sequence SGSVGRMSASSSTSSAGTV. Residues 1106 to 1116 are compositionally biased toward basic residues; the sequence is SKKRSKLCALL. Cys-1113 is modified (cysteine methyl ester). Residue Cys-1113 is the site of S-farnesyl cysteine attachment. The propeptide at 1114-1116 is removed in mature form; the sequence is ALL.

It belongs to the cyclic nucleotide phosphodiesterase family. As to quaternary structure, interacts with PrBP. The cofactor is a divalent metal cation.

The protein localises to the cell membrane. It catalyses the reaction 3',5'-cyclic GMP + H2O = GMP + H(+). Its function is as follows. Has a role regulating cGMP transport in Malpighian tubule principal cells. In Drosophila mojavensis (Fruit fly), this protein is cGMP-specific 3',5'-cyclic phosphodiesterase.